The chain runs to 320 residues: Malate dehydrogenase (320 aa).

NAD(+)-binding positions include 10-15 (GAGQIG) and D34. The substrate site is built by R83 and R89. Residues N96 and 119–121 (ITN) each bind NAD(+). Substrate-binding residues include N121 and R152. The active-site Proton acceptor is the H176.

It belongs to the LDH/MDH superfamily. MDH type 3 family.

It catalyses the reaction (S)-malate + NAD(+) = oxaloacetate + NADH + H(+). Functionally, catalyzes the reversible oxidation of malate to oxaloacetate. The sequence is that of Malate dehydrogenase from Jannaschia sp. (strain CCS1).